Consider the following 428-residue polypeptide: Glutamate-1-semialdehyde 2,1-aminomutase (428 aa).

N6-(pyridoxal phosphate)lysine is present on Lys265.

It belongs to the class-III pyridoxal-phosphate-dependent aminotransferase family. HemL subfamily. Homodimer. Requires pyridoxal 5'-phosphate as cofactor.

It localises to the cytoplasm. It catalyses the reaction (S)-4-amino-5-oxopentanoate = 5-aminolevulinate. The protein operates within porphyrin-containing compound metabolism; protoporphyrin-IX biosynthesis; 5-aminolevulinate from L-glutamyl-tRNA(Glu): step 2/2. In Aeromonas salmonicida (strain A449), this protein is Glutamate-1-semialdehyde 2,1-aminomutase.